The following is a 581-amino-acid chain: Arginine--tRNA ligase (581 aa).

The short motif at 126–136 is the 'HIGH' region element; that stretch reads PNLAKEMHVGH.

Belongs to the class-I aminoacyl-tRNA synthetase family. In terms of assembly, monomer.

It is found in the cytoplasm. It carries out the reaction tRNA(Arg) + L-arginine + ATP = L-arginyl-tRNA(Arg) + AMP + diphosphate. The polypeptide is Arginine--tRNA ligase (Shewanella pealeana (strain ATCC 700345 / ANG-SQ1)).